A 1878-amino-acid polypeptide reads, in one-letter code: DNA polymerase (1878 aa).

Disordered regions lie at residues 691–727 (LFQA…KGPN) and 1839–1878 (TQDD…GTMF). Over residues 694 to 709 (ADDDDDDDDEDEDDGL) the composition is skewed to acidic residues. The span at 710–723 (LDERQQDSAEDMKK) shows a compositional bias: basic and acidic residues. Residues 1868–1878 (ITAGKTAGTMF) show a composition bias toward low complexity.

It belongs to the DNA polymerase type-B family.

It carries out the reaction DNA(n) + a 2'-deoxyribonucleoside 5'-triphosphate = DNA(n+1) + diphosphate. The protein is DNA polymerase of Magallana gigas (Pacific oyster).